The sequence spans 214 residues: Urease accessory protein UreG 2 (214 aa).

GTP is bound at residue 22 to 29 (GPVGSGKT).

This sequence belongs to the SIMIBI class G3E GTPase family. UreG subfamily. In terms of assembly, homodimer. UreD, UreF and UreG form a complex that acts as a GTP-hydrolysis-dependent molecular chaperone, activating the urease apoprotein by helping to assemble the nickel containing metallocenter of UreC. The UreE protein probably delivers the nickel.

Its subcellular location is the cytoplasm. Functionally, facilitates the functional incorporation of the urease nickel metallocenter. This process requires GTP hydrolysis, probably effectuated by UreG. The chain is Urease accessory protein UreG 2 from Bradyrhizobium sp. (strain BTAi1 / ATCC BAA-1182).